We begin with the raw amino-acid sequence, 84 residues long: RNA-binding protein Hfq (84 aa).

The 60-residue stretch at 10 to 69 (DPFLNILRKERIPVSIYLVNGIKLQGQIDSFDQYVVLLKNSVTQMVYKHAISTIVPAKAI) folds into the Sm domain.

Belongs to the Hfq family. As to quaternary structure, homohexamer.

Functionally, RNA chaperone that binds small regulatory RNA (sRNAs) and mRNAs to facilitate mRNA translational regulation in response to envelope stress, environmental stress and changes in metabolite concentrations. Also binds with high specificity to tRNAs. The sequence is that of RNA-binding protein Hfq from Nitrosomonas europaea (strain ATCC 19718 / CIP 103999 / KCTC 2705 / NBRC 14298).